Reading from the N-terminus, the 140-residue chain is Organic hydroperoxide resistance protein-like (140 aa).

This sequence belongs to the OsmC/Ohr family.

This chain is Organic hydroperoxide resistance protein-like, found in Staphylococcus aureus (strain MSSA476).